A 747-amino-acid polypeptide reads, in one-letter code: DNA ligase (747 aa).

Residues 33–37 (DEEYD), 83–84 (SL), and E113 contribute to the NAD(+) site. Catalysis depends on K115, which acts as the N6-AMP-lysine intermediate. NAD(+) is bound by residues R136, E174, K299, and K323. C417, C420, C436, and C442 together coordinate Zn(2+). The BRCT domain maps to 659–747 (TGGGVLSGLT…GPGALPEVAE (89 aa)).

It belongs to the NAD-dependent DNA ligase family. LigA subfamily. Mg(2+) serves as cofactor. The cofactor is Mn(2+).

It catalyses the reaction NAD(+) + (deoxyribonucleotide)n-3'-hydroxyl + 5'-phospho-(deoxyribonucleotide)m = (deoxyribonucleotide)n+m + AMP + beta-nicotinamide D-nucleotide.. Its function is as follows. DNA ligase that catalyzes the formation of phosphodiester linkages between 5'-phosphoryl and 3'-hydroxyl groups in double-stranded DNA using NAD as a coenzyme and as the energy source for the reaction. It is essential for DNA replication and repair of damaged DNA. The polypeptide is DNA ligase (Leifsonia xyli subsp. xyli (strain CTCB07)).